Reading from the N-terminus, the 437-residue chain is MRVLHVAPEAYPLAKVGGLADVVGALPKALGPLGVEAHVLLPWHGGLEARRVGEVAFAFFGREERAPLGERVEGGVRFLLLGVEGFGRERVYGYPDDAERYLRFALAAKEVARGYDLVHAHDWTAALLALYAPTVYTIHNLAHQGLVDPGLFFSWTGLPWSLFHMEALEFYGRVNLMKGGIVFARRVTTVSPSYAEEIQTPEFGMGLDGVLRRHAGKLRGILNGLDTEVFDPGKDPYLPAPYTREDPSGKARAKEAFRERTGLRPPVLAYVGRLDYQKGLDLVLKALPRLLEMGFRLYVQGVGDGGLQEAFLRAEEENPEGVRFLPAYDEAMARLAYAGAEAVLVPSRFEPCGLVQMIASRYGTPPVARAVGGLKDTVEDGRAGVLFETYHPEGLLYGVLRLFRLGAEEMGLRAMEKDFSWEGPARAYREVYREALG.

Lys-15 provides a ligand contact to ADP-alpha-D-glucose.

It belongs to the glycosyltransferase 1 family. Bacterial/plant glycogen synthase subfamily.

It carries out the reaction [(1-&gt;4)-alpha-D-glucosyl](n) + ADP-alpha-D-glucose = [(1-&gt;4)-alpha-D-glucosyl](n+1) + ADP + H(+). The protein operates within glycan biosynthesis; glycogen biosynthesis. Its function is as follows. Synthesizes alpha-1,4-glucan chains using ADP-glucose. This is Glycogen synthase from Thermus thermophilus (strain ATCC BAA-163 / DSM 7039 / HB27).